The following is a 195-amino-acid chain: Dephospho-CoA kinase (195 aa).

One can recognise a DPCK domain in the interval Ile2–Ser195. ATP is bound at residue Gly10–Phe15.

The protein belongs to the CoaE family.

The protein resides in the cytoplasm. It carries out the reaction 3'-dephospho-CoA + ATP = ADP + CoA + H(+). It functions in the pathway cofactor biosynthesis; coenzyme A biosynthesis; CoA from (R)-pantothenate: step 5/5. Functionally, catalyzes the phosphorylation of the 3'-hydroxyl group of dephosphocoenzyme A to form coenzyme A. The protein is Dephospho-CoA kinase of Wolbachia sp. subsp. Brugia malayi (strain TRS).